Here is a 596-residue protein sequence, read N- to C-terminus: Chaperone protein DnaK (596 aa).

Thr-174 bears the Phosphothreonine; by autocatalysis mark. Residues 576-596 (ANATKDQSSKDQEEVATVVEE) form a disordered region.

The protein belongs to the heat shock protein 70 family.

In terms of biological role, acts as a chaperone. The chain is Chaperone protein DnaK from Mycoplasmopsis synoviae (strain 53) (Mycoplasma synoviae).